A 371-amino-acid polypeptide reads, in one-letter code: Bifunctional enzyme IspD/IspF (371 aa).

Positions 1–210 are 2-C-methyl-D-erythritol 4-phosphate cytidylyltransferase; it reads MSEMSLIMLA…LDLPTPSFEI (210 aa). The interval 211-371 is 2-C-methyl-D-erythritol 2,4-cyclodiphosphate synthase; it reads FTGNGFDVHE…NLKYFDWTRL (161 aa). D217 and H219 together coordinate a divalent metal cation. 4-CDP-2-C-methyl-D-erythritol 2-phosphate contacts are provided by residues 217–219 and 243–244; these read DVH and HS. Position 251 (H251) interacts with a divalent metal cation. 4-CDP-2-C-methyl-D-erythritol 2-phosphate contacts are provided by residues 265–267, 270–274, 309–315, 341–344, F348, and R351; these read DIG, YPDTD, AQSPKLK, and TTTE.

It in the N-terminal section; belongs to the IspD/TarI cytidylyltransferase family. IspD subfamily. In the C-terminal section; belongs to the IspF family. It depends on a divalent metal cation as a cofactor.

It carries out the reaction 2-C-methyl-D-erythritol 4-phosphate + CTP + H(+) = 4-CDP-2-C-methyl-D-erythritol + diphosphate. The enzyme catalyses 4-CDP-2-C-methyl-D-erythritol 2-phosphate = 2-C-methyl-D-erythritol 2,4-cyclic diphosphate + CMP. It functions in the pathway isoprenoid biosynthesis; isopentenyl diphosphate biosynthesis via DXP pathway; isopentenyl diphosphate from 1-deoxy-D-xylulose 5-phosphate: step 2/6. The protein operates within isoprenoid biosynthesis; isopentenyl diphosphate biosynthesis via DXP pathway; isopentenyl diphosphate from 1-deoxy-D-xylulose 5-phosphate: step 4/6. Bifunctional enzyme that catalyzes the formation of 4-diphosphocytidyl-2-C-methyl-D-erythritol from CTP and 2-C-methyl-D-erythritol 4-phosphate (MEP) (IspD), and catalyzes the conversion of 4-diphosphocytidyl-2-C-methyl-D-erythritol 2-phosphate (CDP-ME2P) to 2-C-methyl-D-erythritol 2,4-cyclodiphosphate (ME-CPP) with a corresponding release of cytidine 5-monophosphate (CMP) (IspF). The chain is Bifunctional enzyme IspD/IspF from Campylobacter jejuni subsp. jejuni serotype O:2 (strain ATCC 700819 / NCTC 11168).